The primary structure comprises 542 residues: CTP synthase (542 aa).

Residues 1-265 form an amidoligase domain region; sequence MTKYIFVTGG…LKPISKELSL (265 aa). Position 13 (S13) interacts with CTP. S13 contributes to the UTP binding site. Residues 14-19 and D71 contribute to the ATP site; that span reads SLGKGI. Mg(2+) contacts are provided by D71 and E139. Residues 146 to 148, 186 to 191, and K222 each bind CTP; these read DIE and KSKPTQ. Residues 186-191 and K222 each bind UTP; that span reads KSKPTQ. Positions 290 to 541 constitute a Glutamine amidotransferase type-1 domain; the sequence is VLGFVGKYLE…VEATLAISQE (252 aa). G352 is an L-glutamine binding site. C379 acts as the Nucleophile; for glutamine hydrolysis in catalysis. L-glutamine is bound by residues 380-383, E403, and R471; that span reads LGMQ. Catalysis depends on residues H514 and E516.

Belongs to the CTP synthase family. Homotetramer.

It catalyses the reaction UTP + L-glutamine + ATP + H2O = CTP + L-glutamate + ADP + phosphate + 2 H(+). It carries out the reaction L-glutamine + H2O = L-glutamate + NH4(+). The catalysed reaction is UTP + NH4(+) + ATP = CTP + ADP + phosphate + 2 H(+). It participates in pyrimidine metabolism; CTP biosynthesis via de novo pathway; CTP from UDP: step 2/2. Its activity is regulated as follows. Allosterically activated by GTP, when glutamine is the substrate; GTP has no effect on the reaction when ammonia is the substrate. The allosteric effector GTP functions by stabilizing the protein conformation that binds the tetrahedral intermediate(s) formed during glutamine hydrolysis. Inhibited by the product CTP, via allosteric rather than competitive inhibition. Catalyzes the ATP-dependent amination of UTP to CTP with either L-glutamine or ammonia as the source of nitrogen. Regulates intracellular CTP levels through interactions with the four ribonucleotide triphosphates. The protein is CTP synthase of Sulfurimonas denitrificans (strain ATCC 33889 / DSM 1251) (Thiomicrospira denitrificans (strain ATCC 33889 / DSM 1251)).